The primary structure comprises 710 residues: Serine/threonine-protein phosphatase PP-Z2 (710 aa).

Positions 1–382 (MGNSGSKQHT…ADGDNGSRTN (382 aa)) are disordered. Residue glycine 2 is the site of N-myristoyl glycine attachment. Basic and acidic residues predominate over residues 15–27 (KKDDHDGDRKKTL). Residues 40–49 (SLKSSRSLRS) are compositionally biased toward low complexity. A phosphoserine mark is found at serine 55 and serine 71. Polar residues-rich tracts occupy residues 62–77 (NVQA…SSTL) and 95–104 (PNNHYLTSHP). 2 stretches are compositionally biased toward low complexity: residues 105–125 (SSSR…NNNS) and 143–155 (NSTS…SFNS). The span at 160–172 (LTDDDDDRGDDGG) shows a compositional bias: acidic residues. Threonine 161 is modified (phosphothreonine). 2 positions are modified to phosphoserine: serine 203 and serine 224. Low complexity predominate over residues 247–260 (SNRSNSHASSRKSS). Residues 261 to 273 (FGSTGNTAYSTPL) show a composition bias toward polar residues. Threonine 271 carries the post-translational modification Phosphothreonine. At serine 275 the chain carries Phosphoserine. The span at 291-302 (DNVNGRGTSPIP) shows a compositional bias: polar residues. Position 310 is a phosphoserine (serine 310). The Mn(2+) site is built by aspartate 454, histidine 456, aspartate 482, and asparagine 514. Histidine 515 functions as the Proton donor in the catalytic mechanism. Positions 563 and 638 each coordinate Mn(2+).

This sequence belongs to the PPP phosphatase family. PP-Z subfamily. Mn(2+) is required as a cofactor.

It catalyses the reaction O-phospho-L-seryl-[protein] + H2O = L-seryl-[protein] + phosphate. It carries out the reaction O-phospho-L-threonyl-[protein] + H2O = L-threonyl-[protein] + phosphate. Its function is as follows. Essential for the maintenance of cell size and integrity in response to osmotic stress. This Saccharomyces cerevisiae (strain ATCC 204508 / S288c) (Baker's yeast) protein is Serine/threonine-protein phosphatase PP-Z2 (PPZ2).